The following is a 410-amino-acid chain: Testis-specific protein TEX28 (410 aa).

A disordered region spans residues 1–43 (MVLKAEHTRSPSATLPSNVPSCRSLSSSEDGPSGPSSLADGGL). Polar residues predominate over residues 10 to 23 (SPSATLPSNVPSCR). Low complexity predominate over residues 24-38 (SLSSSEDGPSGPSSL). A coiled-coil region spans residues 93-128 (QAFEKVNQRASATIAQIEHRLHQCHQQLQELEEGCR). The disordered stretch occupies residues 137 to 164 (ESDPANCEPPSEKALLSEPPEPGGEDGP). Positions 185–245 (QGTCLETEDV…LLLESLQEEK (61 aa)) form a coiled coil. A helical membrane pass occupies residues 336 to 358 (LSLATVLLVFVSTLCACPSSLIS).

It belongs to the TEX28 family. In terms of tissue distribution, testis specific.

The protein localises to the membrane. This chain is Testis-specific protein TEX28 (TEX28), found in Homo sapiens (Human).